Here is a 64-residue protein sequence, read N- to C-terminus: Large ribosomal subunit protein bL35 (64 aa).

Residues 1 to 56 (MPKMKSNKSVAARFKLTGSGQLKRTRPGKRHKLSKKSSQEKRNLSKQPLVDKGQVG) form a disordered region. The span at 23-35 (KRTRPGKRHKLSK) shows a compositional bias: basic residues.

The protein belongs to the bacterial ribosomal protein bL35 family.

This Chlamydia abortus (strain DSM 27085 / S26/3) (Chlamydophila abortus) protein is Large ribosomal subunit protein bL35.